The chain runs to 381 residues: tRNA (guanine(26)-N(2))-dimethyltransferase (381 aa).

Positions 7-378 (IEVQEGKAKI…APYEVFIETI (372 aa)) constitute a Trm1 methyltransferase domain. S-adenosyl-L-methionine is bound by residues Arg-39, Arg-64, Asp-81, Asp-123, and Ala-124.

The protein belongs to the class I-like SAM-binding methyltransferase superfamily. Trm1 family.

The catalysed reaction is guanosine(26) in tRNA + 2 S-adenosyl-L-methionine = N(2)-dimethylguanosine(26) in tRNA + 2 S-adenosyl-L-homocysteine + 2 H(+). Dimethylates a single guanine residue at position 26 of a number of tRNAs using S-adenosyl-L-methionine as donor of the methyl groups. In Pyrococcus horikoshii (strain ATCC 700860 / DSM 12428 / JCM 9974 / NBRC 100139 / OT-3), this protein is tRNA (guanine(26)-N(2))-dimethyltransferase.